The primary structure comprises 310 residues: Beta-ketoacyl-[acyl-carrier-protein] synthase III (310 aa).

Active-site residues include Cys-112 and His-235. Residues 236–240 form an ACP-binding region; that stretch reads QANIR. Asn-265 is an active-site residue.

Belongs to the thiolase-like superfamily. FabH family. In terms of assembly, homodimer.

It is found in the cytoplasm. The catalysed reaction is malonyl-[ACP] + acetyl-CoA + H(+) = 3-oxobutanoyl-[ACP] + CO2 + CoA. Its pathway is lipid metabolism; fatty acid biosynthesis. In terms of biological role, catalyzes the condensation reaction of fatty acid synthesis by the addition to an acyl acceptor of two carbons from malonyl-ACP. Catalyzes the first condensation reaction which initiates fatty acid synthesis and may therefore play a role in governing the total rate of fatty acid production. Possesses both acetoacetyl-ACP synthase and acetyl transacylase activities. Its substrate specificity determines the biosynthesis of branched-chain and/or straight-chain of fatty acids. This is Beta-ketoacyl-[acyl-carrier-protein] synthase III from Geobacillus kaustophilus (strain HTA426).